A 409-amino-acid chain; its full sequence is Probable tRNA pseudouridine synthase D (409 aa).

D73 functions as the Nucleophile in the catalytic mechanism. In terms of domain architecture, TRUD spans 146–365 (GFPNFFGDQR…SSGDRRIISA (220 aa)).

The protein belongs to the pseudouridine synthase TruD family.

It catalyses the reaction uridine(13) in tRNA = pseudouridine(13) in tRNA. Could be responsible for synthesis of pseudouridine from uracil-13 in transfer RNAs. The protein is Probable tRNA pseudouridine synthase D of Thermoplasma volcanium (strain ATCC 51530 / DSM 4299 / JCM 9571 / NBRC 15438 / GSS1).